Reading from the N-terminus, the 244-residue chain is Na(+)-translocating NADH-quinone reductase subunit E (244 aa).

Helical transmembrane passes span 11–31 (LLGI…TFLG), 50–70 (MSVA…HYFI), 90–110 (FLEL…LELL), 123–143 (GIFL…LFGI), 153–173 (VVFS…FATI), and 191–211 (ISFI…GIDI).

Belongs to the NqrDE/RnfAE family. In terms of assembly, composed of six subunits; NqrA, NqrB, NqrC, NqrD, NqrE and NqrF.

Its subcellular location is the cell inner membrane. The catalysed reaction is a ubiquinone + n Na(+)(in) + NADH + H(+) = a ubiquinol + n Na(+)(out) + NAD(+). Its function is as follows. NQR complex catalyzes the reduction of ubiquinone-1 to ubiquinol by two successive reactions, coupled with the transport of Na(+) ions from the cytoplasm to the periplasm. NqrA to NqrE are probably involved in the second step, the conversion of ubisemiquinone to ubiquinol. The sequence is that of Na(+)-translocating NADH-quinone reductase subunit E from Chlamydia trachomatis serovar L2 (strain ATCC VR-902B / DSM 19102 / 434/Bu).